The sequence spans 454 residues: Laccase-3 (454 aa).

Plastocyanin-like domains follow at residues 1-95 (PGPT…GPAT) and 101-252 (DLGV…YSGA). The N-linked (GlcNAc...) asparagine glycan is linked to Asn-24. His-29, His-31, His-73, and His-75 together coordinate Cu cation. N-linked (GlcNAc...) asparagine glycosylation is found at Asn-138, Asn-169, Asn-218, Asn-314, and Asn-334. The 136-residue stretch at 319-454 (DVDWKKPILQ…SEGLAVQFQG (136 aa)) folds into the Plastocyanin-like 3 domain. Cu cation is bound by residues His-375, His-378, and His-380. Asn-395 is a glycosylation site (N-linked (GlcNAc...) asparagine). 4 residues coordinate Cu cation: His-437, Cys-438, His-439, and His-443.

The protein belongs to the multicopper oxidase family. The cofactor is Cu cation.

The protein resides in the secreted. The enzyme catalyses 4 hydroquinone + O2 = 4 benzosemiquinone + 2 H2O. Its function is as follows. Lignin degradation and detoxification of lignin-derived products. This Botryotinia fuckeliana (Noble rot fungus) protein is Laccase-3 (lcc3).